The primary structure comprises 198 residues: Recombination protein RecR (198 aa).

The C4-type zinc-finger motif lies at 57–72 (CTICGHITDTDPCYIC). Residues 80–175 (TTICVVQDPK…KVTRIAHGLP (96 aa)) enclose the Toprim domain.

The protein belongs to the RecR family.

May play a role in DNA repair. It seems to be involved in an RecBC-independent recombinational process of DNA repair. It may act with RecF and RecO. This Geobacillus kaustophilus (strain HTA426) protein is Recombination protein RecR.